The sequence spans 77 residues: Cysteine-rich protein 1 (77 aa).

The LIM zinc-binding domain maps to 2–63; the sequence is PKCPKCDKEV…HPCYSAMFGP (62 aa). Residues Lys-9 and Lys-22 each carry the N6-acetyllysine modification. Omega-N-methylarginine is present on Arg-68.

Seems to have a role in zinc absorption and may function as an intracellular zinc transport protein. The chain is Cysteine-rich protein 1 (Crip1) from Mus musculus (Mouse).